The chain runs to 91 residues: Small ribosomal subunit protein uS17 (91 aa).

This sequence belongs to the universal ribosomal protein uS17 family. As to quaternary structure, part of the 30S ribosomal subunit.

Functionally, one of the primary rRNA binding proteins, it binds specifically to the 5'-end of 16S ribosomal RNA. The sequence is that of Small ribosomal subunit protein uS17 from Psychrobacter cryohalolentis (strain ATCC BAA-1226 / DSM 17306 / VKM B-2378 / K5).